The sequence spans 842 residues: Protein translocase subunit SecA (842 aa).

ATP is bound by residues Gln91, 109-113 (GEGKT), and Asp498. Residues 798-824 (QGQHVSAEDGKEKVKPQPVVKDNHIGR) are compositionally biased toward basic and acidic residues. The segment at 798 to 827 (QGQHVSAEDGKEKVKPQPVVKDNHIGRNDP) is disordered. Zn(2+) is bound by residues Cys828, Cys830, Cys839, and Cys840.

The protein belongs to the SecA family. As to quaternary structure, monomer and homodimer. Part of the essential Sec protein translocation apparatus which comprises SecA, SecYEG and auxiliary proteins SecDF. Other proteins may also be involved. Requires Zn(2+) as cofactor.

The protein resides in the cell membrane. It localises to the cytoplasm. It catalyses the reaction ATP + H2O + cellular proteinSide 1 = ADP + phosphate + cellular proteinSide 2.. Part of the Sec protein translocase complex. Interacts with the SecYEG preprotein conducting channel. Has a central role in coupling the hydrolysis of ATP to the transfer of proteins into and across the cell membrane, serving as an ATP-driven molecular motor driving the stepwise translocation of polypeptide chains across the membrane. This is Protein translocase subunit SecA from Staphylococcus carnosus (strain TM300).